The chain runs to 145 residues: Peptide methionine sulfoxide reductase MsrB (145 aa).

A MsrB domain is found at 4–127; sequence SDELKQRIGD…NSAALKFIPY (124 aa). The Nucleophile role is filled by Cys-116.

This sequence belongs to the MsrB Met sulfoxide reductase family.

It catalyses the reaction L-methionyl-[protein] + [thioredoxin]-disulfide + H2O = L-methionyl-(R)-S-oxide-[protein] + [thioredoxin]-dithiol. This Streptococcus pyogenes serotype M18 (strain MGAS8232) protein is Peptide methionine sulfoxide reductase MsrB.